Reading from the N-terminus, the 303-residue chain is Hemolysin E (303 aa).

Residues Cys87 and Cys285 are joined by a disulfide bond. Residues 183 to 203 form a helical membrane-spanning segment; sequence AGVVAGPFGLIISYSIAAGVV.

This sequence belongs to the hemolysin E family. Monomer and oligomer. In periplasm, it is present as a monomer, while in outer membrane vesicles, it oligomerizes to form a pore structure that is active. The pore is formed by a dodecamer. In terms of processing, in periplasm, it forms a disulfide bond, which prevents the oligomerization. In outer membrane vesicles, the redox status prevents formation of the disulfide bond, leading to oligomerization and pore formation.

It is found in the secreted. The protein localises to the periplasm. Its subcellular location is the host cell membrane. Functionally, toxin, which has some hemolytic activity towards mammalian cells. Acts by forming a pore-like structure upon contact with mammalian cells. The protein is Hemolysin E (hlyE) of Escherichia coli O157:H7.